The chain runs to 25 residues: Antithrombin-III (25 aa).

The protein belongs to the serpin family. In terms of assembly, forms protease inhibiting heterodimer with TMPRSS7. In terms of processing, phosphorylated by FAM20C in the extracellular medium. In terms of tissue distribution, plasma.

Its subcellular location is the secreted. It localises to the extracellular space. Most important serine protease inhibitor in plasma that regulates the blood coagulation cascade. AT-III inhibits thrombin, matriptase-3/TMPRSS7, as well as factors IXa, Xa and XIa. Its inhibitory activity is greatly enhanced in the presence of heparin. The chain is Antithrombin-III (SERPINC1) from Mesocricetus auratus (Golden hamster).